The following is a 316-amino-acid chain: N-acetyl-gamma-glutamyl-phosphate reductase (316 aa).

Cysteine 136 is an active-site residue.

This sequence belongs to the NAGSA dehydrogenase family. Type 1 subfamily.

It localises to the cytoplasm. It carries out the reaction N-acetyl-L-glutamate 5-semialdehyde + phosphate + NADP(+) = N-acetyl-L-glutamyl 5-phosphate + NADPH + H(+). The protein operates within amino-acid biosynthesis; L-arginine biosynthesis; N(2)-acetyl-L-ornithine from L-glutamate: step 3/4. Catalyzes the NADPH-dependent reduction of N-acetyl-5-glutamyl phosphate to yield N-acetyl-L-glutamate 5-semialdehyde. The sequence is that of N-acetyl-gamma-glutamyl-phosphate reductase from Xanthomonas campestris pv. campestris (strain 8004).